Reading from the N-terminus, the 336-residue chain is Dihydroorotate dehydrogenase (quinone) (336 aa).

FMN-binding positions include 62–66 (AGLDK) and threonine 86. Lysine 66 provides a ligand contact to substrate. Residue 111–115 (NRFGF) participates in substrate binding. The FMN site is built by asparagine 139 and asparagine 172. Residue asparagine 172 coordinates substrate. Catalysis depends on serine 175, which acts as the Nucleophile. Residue asparagine 177 participates in substrate binding. Positions 217 and 245 each coordinate FMN. 246 to 247 (NT) contributes to the substrate binding site. Residues glycine 268, glycine 297, and 318 to 319 (YS) each bind FMN.

Belongs to the dihydroorotate dehydrogenase family. Type 2 subfamily. In terms of assembly, monomer. The cofactor is FMN.

It localises to the cell membrane. It carries out the reaction (S)-dihydroorotate + a quinone = orotate + a quinol. It participates in pyrimidine metabolism; UMP biosynthesis via de novo pathway; orotate from (S)-dihydroorotate (quinone route): step 1/1. Functionally, catalyzes the conversion of dihydroorotate to orotate with quinone as electron acceptor. The sequence is that of Dihydroorotate dehydrogenase (quinone) from Photobacterium profundum (strain SS9).